The chain runs to 446 residues: Sterile alpha motif domain-containing protein 7 (446 aa).

Residues 94-168 (HTARTEMEMY…NLQGNPMLAA (75 aa)) are required for localization to nuclear polycomb bodies. 2 disordered regions span residues 187 to 207 (NTGN…QAEE) and 225 to 277 (KDPD…AWDD). The segment covering 232–249 (PSNQKSSETNEKPTTALA) has biased composition (polar residues). The region spanning 327 to 392 (WTVDDVHSFI…SQVSQHVGSM (66 aa)) is the SAM domain.

In terms of assembly, monomer, homodimer and homooligomer. Component of a Polycomb group (PcG) multiprotein PRC1-like complex. Interacts with PHC2, NR2E3 and SAMD11. Interacts with RNF1 in a PHC2-dependent manner. In terms of tissue distribution, expressed in the retina (at protein level). Expressed in the retinal inner and outer nuclear layers.

The protein resides in the nucleus. The protein localises to the cytoplasm. Component of a Polycomb group (PcG) multiprotein PRC1-like complex, essential for establishing rod photoreceptor cell identity and function by silencing nonrod gene expression in developing rod photoreceptor cells. Via its association with the PRC1-like complex, promotes epigenetic repressive marks H3K27me3 and H2AK119ub marks in nonrod genes, silencing their transcription. Represses Crx-controlled photoreceptor-specific gene expression. The chain is Sterile alpha motif domain-containing protein 7 (SAMD7) from Homo sapiens (Human).